Here is a 349-residue protein sequence, read N- to C-terminus: Probable ethanolamine kinase A (349 aa).

Belongs to the choline/ethanolamine kinase family.

It localises to the cytoplasm. It catalyses the reaction ethanolamine + ATP = phosphoethanolamine + ADP + H(+). The protein operates within phospholipid metabolism; phosphatidylethanolamine biosynthesis; phosphatidylethanolamine from ethanolamine: step 1/3. Its function is as follows. Highly specific for ethanolamine phosphorylation. May be a rate-controlling step in phosphatidylethanolamine biosynthesis. In Dictyostelium discoideum (Social amoeba), this protein is Probable ethanolamine kinase A (etnkA).